The primary structure comprises 274 residues: 2,3,4,5-tetrahydropyridine-2,6-dicarboxylate N-succinyltransferase (274 aa).

Residues Arg103 and Asp140 each contribute to the substrate site.

This sequence belongs to the transferase hexapeptide repeat family. As to quaternary structure, homotrimer.

It localises to the cytoplasm. It catalyses the reaction (S)-2,3,4,5-tetrahydrodipicolinate + succinyl-CoA + H2O = (S)-2-succinylamino-6-oxoheptanedioate + CoA. The protein operates within amino-acid biosynthesis; L-lysine biosynthesis via DAP pathway; LL-2,6-diaminopimelate from (S)-tetrahydrodipicolinate (succinylase route): step 1/3. The chain is 2,3,4,5-tetrahydropyridine-2,6-dicarboxylate N-succinyltransferase from Actinobacillus pleuropneumoniae serotype 5b (strain L20).